The following is a 428-amino-acid chain: Sporulation kinase B (428 aa).

At Met1 to Asp6 the chain is on the cytoplasmic side. A helical transmembrane segment spans residues Tyr7–Gly27. Residues Lys28 to Asn37 lie on the Extracellular side of the membrane. Residues Ser38–His58 form a helical membrane-spanning segment. Topologically, residues Glu59–Gln68 are cytoplasmic. The helical transmembrane segment at Met69–Ala89 threads the bilayer. Topologically, residues Ser90–Tyr99 are extracellular. Residues Glu100–Phe120 form a helical membrane-spanning segment. The Cytoplasmic segment spans residues Gln121–Lys132. The chain crosses the membrane as a helical span at residues Leu133–Ile153. The Extracellular portion of the chain corresponds to Leu154–Gly166. The chain crosses the membrane as a helical span at residues Ile167–Ile187. Over Tyr188–His428 the chain is Cytoplasmic. The Histidine kinase domain maps to Ser218 to Leu426. His221 carries the phosphohistidine; by autocatalysis modification.

It localises to the cell membrane. The catalysed reaction is ATP + protein L-histidine = ADP + protein N-phospho-L-histidine.. Phosphorylates the sporulation-regulatory proteins spo0A and spo0F. Spo0F is required for the KinB activity. In Bacillus subtilis (strain 168), this protein is Sporulation kinase B (kinB).